A 459-amino-acid chain; its full sequence is UDP-N-acetylmuramate--L-alanine ligase (459 aa).

Residue glycine 113–serine 119 coordinates ATP.

Belongs to the MurCDEF family.

It is found in the cytoplasm. The catalysed reaction is UDP-N-acetyl-alpha-D-muramate + L-alanine + ATP = UDP-N-acetyl-alpha-D-muramoyl-L-alanine + ADP + phosphate + H(+). The protein operates within cell wall biogenesis; peptidoglycan biosynthesis. Functionally, cell wall formation. This Desulfotalea psychrophila (strain LSv54 / DSM 12343) protein is UDP-N-acetylmuramate--L-alanine ligase.